The following is a 355-amino-acid chain: Protein RecA (355 aa).

72-79 contributes to the ATP binding site; the sequence is GPESSGKT.

It belongs to the RecA family.

Its subcellular location is the cytoplasm. Functionally, can catalyze the hydrolysis of ATP in the presence of single-stranded DNA, the ATP-dependent uptake of single-stranded DNA by duplex DNA, and the ATP-dependent hybridization of homologous single-stranded DNAs. It interacts with LexA causing its activation and leading to its autocatalytic cleavage. The chain is Protein RecA from Thermosynechococcus vestitus (strain NIES-2133 / IAM M-273 / BP-1).